A 427-amino-acid chain; its full sequence is NADH-quinone oxidoreductase subunit 14 (427 aa).

14 helical membrane passes run 1–21 (MTLAILAVFSVALTLLGFVLP), 30–50 (LLGLALALASLLLTWGKPFAF), 57–77 (GVSQVFTLLALLGALWTVGLV), 79–99 (SGRFEFYLLVLYAALGMHLLA), 104–124 (LLLMLVALEALSLPLYALATW), 137–157 (FLLGALAAAFFLYGAALFYGA), 172–192 (YALALGLLLVGLGFKAALAPF), 204–224 (PTPVVLFMATSVKAAAFAALL), 230–250 (PEALALLVALSVVVGNLAALA), 257–277 (LLAYSSIAHAGYMALALYTGN), 280–300 (ALGFYLLTYVLATGLAFAVLS), 322–342 (LGLAFLVAMLSLLGLPPLAGF), 360–380 (VLVLALVTSAVSAYYYLGLGL), and 400–420 (AAVVAAGVLLLALGLLPGLVL).

The protein belongs to the complex I subunit 2 family. As to quaternary structure, NDH-1 is composed of 15 different subunits, Nqo1 to Nqo15. The complex has a L-shaped structure, with the hydrophobic arm (subunits Nqo7, Nqo8 and Nqo10 to Nqo14) embedded in the membrane and the hydrophilic peripheral arm (subunits Nqo1 to Nqo6, Nqo9 and Nqo15) protruding into the bacterial cytoplasm. The hydrophilic domain contains all the redox centers.

The protein localises to the cell inner membrane. The catalysed reaction is a quinone + NADH + 5 H(+)(in) = a quinol + NAD(+) + 4 H(+)(out). In terms of biological role, NDH-1 shuttles electrons from NADH, via FMN and iron-sulfur (Fe-S) centers, to quinones in the respiratory chain. The immediate electron acceptor for the enzyme in this species is menaquinone. Couples the redox reaction to proton translocation (for every two electrons transferred, four hydrogen ions are translocated across the cytoplasmic membrane), and thus conserves the redox energy in a proton gradient required for the synthesis of ATP. The sequence is that of NADH-quinone oxidoreductase subunit 14 (nqo14) from Thermus thermophilus (strain ATCC 27634 / DSM 579 / HB8).